The chain runs to 661 residues: Cartilage acidic protein 1 (661 aa).

An N-terminal signal peptide occupies residues 1 to 27; that stretch reads MAPSADPGMSRMLPFLLLLWFLPITEG. The stretch at 46–88 is one FG-GAP 1; atypical repeat; the sequence is DYDSNPTQLNYGVAVTDVDHDGDFEIVVAGYNGPNLVLKYDRA. Residues 105 to 147 form an FG-GAP 2; atypical repeat; it reads YALRDRQGNAIGVTACDIDGDGREEIYFLNTNNAFSGVATYTD. An FG-GAP 3; atypical repeat occupies 283-333; it reads AGVDDPHQHGRGVALADFNRDGKVDIVYGNWNGPHRLYLQMSTHGKVRFRD. Residues 395–437 form an FG-GAP 4; atypical repeat; it reads GDALEPEGRGTGGVVTDFDGDGMLDLILSHGESMAQPLSVFRG. An EGF-like domain is found at 559–605; it reads DTNECIQFPFVCPRDKPVCVNTYGSYRCRTNKKCSRGYEPNEDGTAC. 3 disulfides stabilise this stretch: Cys563-Cys577, Cys570-Cys586, and Cys592-Cys605. O-linked (GalNAc...) threonine glycosylation is found at Thr608, Thr618, Thr619, Thr621, and Thr626.

Post-translationally, O-glycosylated. As to expression, expressed in the interterritorial matrix of articular deep zone cartilage (at protein level). Isoform 1 and isoform 2 are expressed in brain. Isoform 1 is detected in lung and chondrocytes. Detected in cartilage, bone, cultured chondrocytes and lung, and at low levels in heart. Not detected in osteoblasts.

The protein localises to the secreted. It is found in the extracellular space. It localises to the extracellular matrix. The polypeptide is Cartilage acidic protein 1 (CRTAC1) (Homo sapiens (Human)).